The chain runs to 534 residues: Replication factor C large subunit (534 aa).

45 to 52 (GPPGIGKT) serves as a coordination point for ATP. Basic and acidic residues predominate over residues 444–463 (KNKKEIKVKTKKDTVEDSSK). The disordered stretch occupies residues 444–534 (KNKKEIKVKT…KSRQTTLFDF (91 aa)). A compositionally biased stretch (low complexity) spans 488 to 510 (SSNSTTKNKTESPKNSSKTSSKT). Basic residues predominate over residues 517–527 (TSKKNNKKKSR).

Belongs to the activator 1 small subunits family. RfcL subfamily. Heteromultimer composed of small subunits (RfcS) and large subunits (RfcL).

Part of the RFC clamp loader complex which loads the PCNA sliding clamp onto DNA. This Methanosphaera stadtmanae (strain ATCC 43021 / DSM 3091 / JCM 11832 / MCB-3) protein is Replication factor C large subunit.